A 420-amino-acid polypeptide reads, in one-letter code: Gamma-glutamyl phosphate reductase (420 aa).

This sequence belongs to the gamma-glutamyl phosphate reductase family.

It is found in the cytoplasm. It carries out the reaction L-glutamate 5-semialdehyde + phosphate + NADP(+) = L-glutamyl 5-phosphate + NADPH + H(+). The protein operates within amino-acid biosynthesis; L-proline biosynthesis; L-glutamate 5-semialdehyde from L-glutamate: step 2/2. In terms of biological role, catalyzes the NADPH-dependent reduction of L-glutamate 5-phosphate into L-glutamate 5-semialdehyde and phosphate. The product spontaneously undergoes cyclization to form 1-pyrroline-5-carboxylate. The protein is Gamma-glutamyl phosphate reductase of Streptococcus pneumoniae (strain Hungary19A-6).